The following is an 88-amino-acid chain: MYTIDISLRGTPLGLSVQRKESADAEALYQQVLAAIKSGNPTILEMTCDREPDKKAAVLVNEITAVQLSDKSGGAGAGRAAGFFELGA.

This sequence belongs to the UPF0367 family.

In Acaryochloris marina (strain MBIC 11017), this protein is UPF0367 protein AM1_1885.